The following is a 430-amino-acid chain: Trigger factor (430 aa).

In terms of domain architecture, PPIase FKBP-type spans 163–248 (GDVVDVDYKG…LNSIKTSILP (86 aa)).

This sequence belongs to the FKBP-type PPIase family. Tig subfamily.

Its subcellular location is the cytoplasm. It carries out the reaction [protein]-peptidylproline (omega=180) = [protein]-peptidylproline (omega=0). Its function is as follows. Involved in protein export. Acts as a chaperone by maintaining the newly synthesized protein in an open conformation. Functions as a peptidyl-prolyl cis-trans isomerase. In Lawsonia intracellularis (strain PHE/MN1-00), this protein is Trigger factor.